A 502-amino-acid polypeptide reads, in one-letter code: Lysine--tRNA ligase (502 aa).

2 residues coordinate Mg(2+): E412 and E419.

This sequence belongs to the class-II aminoacyl-tRNA synthetase family. In terms of assembly, homodimer. Mg(2+) is required as a cofactor.

The protein localises to the cytoplasm. The catalysed reaction is tRNA(Lys) + L-lysine + ATP = L-lysyl-tRNA(Lys) + AMP + diphosphate. The sequence is that of Lysine--tRNA ligase from Histophilus somni (strain 2336) (Haemophilus somnus).